Reading from the N-terminus, the 320-residue chain is Methionine import ATP-binding protein MetN (320 aa).

The region spanning 2-237 is the ABC transporter domain; sequence IEIKNVSKYF…PSSEMKKLIG (236 aa). Residue 34–41 coordinates ATP; it reads GHSGAGKS.

This sequence belongs to the ABC transporter superfamily. Methionine importer (TC 3.A.1.24) family. As to quaternary structure, the complex is composed of two ATP-binding proteins (MetN), two transmembrane proteins (MetI) and a solute-binding protein (MetQ).

The protein localises to the cell membrane. It carries out the reaction L-methionine(out) + ATP + H2O = L-methionine(in) + ADP + phosphate + H(+). It catalyses the reaction D-methionine(out) + ATP + H2O = D-methionine(in) + ADP + phosphate + H(+). In terms of biological role, part of the ABC transporter complex MetNIQ involved in methionine import. Responsible for energy coupling to the transport system. This Clostridium acetobutylicum (strain ATCC 824 / DSM 792 / JCM 1419 / IAM 19013 / LMG 5710 / NBRC 13948 / NRRL B-527 / VKM B-1787 / 2291 / W) protein is Methionine import ATP-binding protein MetN.